The primary structure comprises 5538 residues: Leashin (5538 aa).

Gly residues predominate over residues 1-10; sequence MFRALMGGGR. 22 disordered regions span residues 1-270, 286-315, 331-365, 510-555, 596-712, 800-901, 913-944, 1027-1145, 1164-1297, 1310-1398, 1432-1993, 2067-2146, 2165-2207, 2233-3065, 3077-3894, 3910-4034, 4072-4128, 4238-4421, 4442-4463, 4509-4698, 4733-4850, and 4910-5052; these read MFRA…SSMG, EVDP…TFGI, LPLP…PHTH, SRDA…KKSS, TESV…DISQ, AATS…FPTG, ALAS…PVPT, NRPH…KDSF, VLSG…GYRD, PTPP…RYVS, EDPT…TSVE, SELL…VNAF, NRLS…SPPA, PEAA…SQPI, MAEE…EIVS, EEKA…DTGL, KFKQ…EEPL, EAAL…SNQA, PRPL…DEND, LRRQ…TSNT, KTDG…VEQA, and ALTV…RHRR. The woronin bodies-binding region stretch occupies residues 1–1100; that stretch reads MFRALMGGGR…RASGVQLIDR (1100 aa). Over residues 14–23 the composition is skewed to low complexity; sequence SRSTTSSSKS. Composition is skewed to basic and acidic residues over residues 42–51 and 89–167; these read SRGDDRDRGL and VEHD…ERSR. Polar residues predominate over residues 299–313; it reads AGTTSEPPKPSNTTF. A compositionally biased stretch (pro residues) spans 334 to 352; it reads PASPTSPPEPVPTTAPYAP. A compositionally biased stretch (basic residues) spans 514 to 523; the sequence is PRKHHYRQRR. The span at 598–607 shows a compositional bias: polar residues; that stretch reads SVSTARRSQT. Residues 639 to 655 are compositionally biased toward basic residues; sequence HRSRSRSHSSSRNRRHS. Positions 660–674 are enriched in low complexity; the sequence is AAVGAAVGSGAIALA. The span at 682-698 shows a compositional bias: basic residues; the sequence is SRSRSRSRFPRKSKGRK. Over residues 809 to 825 the composition is skewed to basic and acidic residues; that stretch reads RAGEILVAKETRSRHSD. 2 stretches are compositionally biased toward low complexity: residues 842-851 and 862-880; these read GDQSSSSVSS and GSDE…GWRW. Residues 881–891 show a composition bias toward basic residues; sequence GSKKNKKKKRA. Basic and acidic residues-rich tracts occupy residues 1068-1091, 1098-1145, 1178-1198, 1207-1226, 1356-1365, 1375-1387, 1447-1462, and 1478-1488; these read LTKE…DAER, IDRD…KDSF, SQRR…RGSE, SKSE…RQPE, WGEHKTHEYE, SVDH…REQP, GRVE…ESKS, and EEKAPSSRVIE. Low complexity predominate over residues 1506–1516; it reads QESSEPQTRTS. Composition is skewed to basic and acidic residues over residues 1521–1536, 1549–1559, and 1572–1594; these read VIDR…DGSR, GKERDESELRA, and EELR…DRRS. Positions 1639 to 1648 are enriched in basic residues; the sequence is KKKRRKRRSK. Composition is skewed to basic and acidic residues over residues 1672-1686, 1700-1773, and 1788-1800; these read EKLK…EKKA, EPVD…QRRE, and KSGE…KLSE. Composition is skewed to low complexity over residues 1867-1876 and 1889-1898; these read PAPRSRSRPA and SQSSRRSSIL. The segment covering 1950–1975 has biased composition (basic and acidic residues); the sequence is KNSREMRPLWLVERHGPGHGEHKLEE. Polar residues-rich tracts occupy residues 1984–1993 and 2121–2130; these read KTSSANTSVE and TPQNNVTAAS. Basic and acidic residues-rich tracts occupy residues 2187 to 2196, 2269 to 2279, and 2307 to 2320; these read DADRTHKPIA, VPRDDKRRDSV, and GENK…KNEN. Residues 2321–2331 are compositionally biased toward polar residues; that stretch reads ANDNSQAQTEQ. Residues 2344–2355 show a composition bias toward basic residues; it reads AKKKKKKNKKKR. Residues 2358–2370 show a composition bias toward polar residues; that stretch reads MDSNTQEPTTPVD. Residues 2427 to 2441 are compositionally biased toward basic and acidic residues; that stretch reads DVEKAIEAPDVRKEL. Over residues 2449 to 2461 the composition is skewed to low complexity; it reads APEDTPAEPTAET. Residues 2473–2484 are compositionally biased toward basic residues; sequence KKSKKKKKKKNK. The segment covering 2494–2525 has biased composition (polar residues); it reads DPASTETPEASAANSQVVAAEQVESTLETTQP. Basic and acidic residues-rich tracts occupy residues 2580–2590, 2647–2661, and 2677–2691; these read NQAKELPHPEE, PEDK…DLKS, and ALDK…RPAE. Residues 2719–2734 are compositionally biased toward low complexity; that stretch reads EEPTPTAAELETPLSR. Residues 2735–2747 show a composition bias toward basic residues; sequence KNSKKNKKKNKRK. Residues 2796-2812 are compositionally biased toward basic and acidic residues; the sequence is DENKGESRDVQAVKEET. Over residues 2874–2884 the composition is skewed to basic residues; the sequence is KKKAKKKKNRK. A compositionally biased stretch (polar residues) spans 2885 to 2894; sequence TANVSESQPE. Basic residues-rich tracts occupy residues 3003-3013 and 3089-3100; these read KKSKKNKKKKQ and KKTKKEKKKKRQ. Positions 3145–3172 are enriched in basic and acidic residues; sequence AIEHAEAAAEHSQEQPNKDVTLHADHSP. The span at 3248 to 3268 shows a compositional bias: low complexity; sequence PAMEGGAAAEELVAVEPDVLE. A compositionally biased stretch (polar residues) spans 3293 to 3303; the sequence is ELVNAETTQKT. The segment covering 3329–3341 has biased composition (basic residues); the sequence is SKKKDKKKKKKRQ. Residues 3347 to 3367 are compositionally biased toward basic and acidic residues; that stretch reads DEQRSSTKEEPTAEFSSDHVP. Composition is skewed to low complexity over residues 3397-3409 and 3422-3435; these read TQTA…SSAS and ESTQ…AQTA. Residues 3436–3450 are compositionally biased toward basic residues; the sequence is KSKKKAKKDKKKRKS. Residues 3480–3495 show a composition bias toward basic and acidic residues; the sequence is EGPKPGDKPTSPKDSS. Positions 3547–3564 are enriched in low complexity; the sequence is EEQAVVEETVAPPVVDEA. Polar residues-rich tracts occupy residues 3565–3580 and 3604–3613; these read SQLQ…LWSE and VSPSLENNEG. 2 stretches are compositionally biased toward basic residues: residues 3642–3652 and 3716–3730; these read KSKKNKKKKKR and KAKK…KRQS. The segment covering 3768–3787 has biased composition (polar residues); the sequence is TFSQETSETISTEAKSSEPS. The segment covering 3800 to 3819 has biased composition (basic and acidic residues); it reads KENQSHDTEPHGGNDKDLTW. A compositionally biased stretch (polar residues) spans 3823-3837; the sequence is MVSSQVEQQQGTPSD. Positions 3876–3893 are enriched in basic and acidic residues; the sequence is DRLERSGEEGTRVKKEIV. Polar residues-rich tracts occupy residues 3915–3925 and 3965–3980; these read ISSQGEDTIQV and KDQF…SQSK. Residues 4010 to 4020 are compositionally biased toward acidic residues; sequence TSQDDSVDAVQ. Positions 4111–4123 are enriched in basic and acidic residues; that stretch reads ESRENKFKEKQLA. Residues 4244–4255 are compositionally biased toward basic residues; sequence KNSKKKSKKAKK. Polar residues predominate over residues 4328–4345; the sequence is LGQTPNMDNQTDDVQSTE. Residues 4378 to 4391 are compositionally biased toward basic residues; the sequence is KLSKKDRRKAKKKS. Residues 4392–4406 are compositionally biased toward basic and acidic residues; it reads AKDAIEPSDEPELRN. Residues 4495–5538 form a septal pore-binding region region; the sequence is AIAEFDETAI…SSTMDISNVI (1044 aa). Over residues 4554 to 4570 the composition is skewed to polar residues; it reads TEQSAGLQAKSVSSQGA. Basic and acidic residues-rich tracts occupy residues 4574–4591 and 4660–4673; these read IQDD…DQTK and EESH…EKGP. A compositionally biased stretch (low complexity) spans 4940-4954; that stretch reads SSVSSVKSVQSTHSV. The segment covering 4966–4988 has biased composition (polar residues); the sequence is RNTSGDLRAASQAQESHGTQPHA. A compositionally biased stretch (pro residues) spans 4989–4998; it reads TPQPPQPPPS. The stretch at 5050-5223 forms a coiled coil; sequence HRRSMQHLQE…QQQIAASLHD (174 aa).

As to quaternary structure, binds directly or indirectly to the Woronin body major protein hexA.

The protein resides in the cell septum. Functionally, acts as the tether and is essential for anchoring of Woronin bodies at the septal pore. In damaged hyphae, Woronin bodies occlude septal pores in order to separate intact from damaged compartments. This chain is Leashin, found in Aspergillus fumigatus (strain ATCC MYA-4609 / CBS 101355 / FGSC A1100 / Af293) (Neosartorya fumigata).